Reading from the N-terminus, the 822-residue chain is ATP-dependent zinc metalloprotease FTSH 7, chloroplastic (822 aa).

3 stretches are compositionally biased toward low complexity: residues 1–34 (MASA…RRAS), 80–94 (AEAS…SSSG), and 101–122 (AAAA…AAAT). Disordered stretches follow at residues 1–44 (MASA…ASVR) and 67–136 (PAAR…ENKW). The transit peptide at 1–70 (MASASAAAET…RVLRRPPAAR (70 aa)) directs the protein to the chloroplast. 2 helical membrane-spanning segments follow: residues 154-174 (IVQG…IFAL) and 288-308 (GGLL…AVVL). 386–393 (GLPGTGKT) is a binding site for ATP. A Zn(2+)-binding site is contributed by histidine 611. The active site involves glutamate 612. Positions 615 and 694 each coordinate Zn(2+).

It in the N-terminal section; belongs to the AAA ATPase family. In the C-terminal section; belongs to the peptidase M41 family. It depends on Zn(2+) as a cofactor.

Its subcellular location is the plastid. The protein localises to the chloroplast thylakoid membrane. In terms of biological role, probable ATP-dependent zinc metallopeptidase. The protein is ATP-dependent zinc metalloprotease FTSH 7, chloroplastic (FTSH7) of Oryza sativa subsp. japonica (Rice).